Reading from the N-terminus, the 456-residue chain is Peripherin (456 aa).

Polar residues predominate over residues M1–R14. Residues M1 to R55 form a disordered region. The head stretch occupies residues M1 to A90. Positions T16 to R55 are enriched in low complexity. The 310-residue stretch at E88–I397 folds into the IF rod domain. The tract at residues E91–A123 is coil 1A. Residues R124–L134 form a linker 1 region. The tract at residues C135–V230 is coil 1B. Residues Q231–T252 form a linker 2 region. A coil 2 region spans residues S253–S395. The segment at R396–K456 is tail. The disordered stretch occupies residues S411–K456. The segment covering I434–K456 has biased composition (basic and acidic residues).

It belongs to the intermediate filament family. Forms homodimers (in vitro). Homopolymerizes into a filamentous network (in vitro).

The protein localises to the cytoplasm. It localises to the cytoskeleton. It is found in the cell projection. Its subcellular location is the axon. The protein resides in the perikaryon. Functionally, class-III neuronal intermediate filament protein. My form an independent structural network without the involvement of other neurofilaments or may cooperate with other neuronal intermediate filament proteins to form a filamentous network. The chain is Peripherin (prph) from Xenopus laevis (African clawed frog).